The primary structure comprises 494 residues: Splicing regulatory glutamine/lysine-rich protein 1 (494 aa).

An RRM domain is found at 69 to 145; the sequence is RTVYVGNLNS…RPLKINHSNN (77 aa). Phosphoserine is present on residues S174 and S187. Residues 176–494 are disordered; the sequence is ISAAIEPESG…ERLCSTADAV (319 aa). Residues 183-192 are compositionally biased toward basic and acidic residues; that stretch reads ESGKSNERKG. Composition is skewed to basic residues over residues 193–230 and 238–262; these read GRSRSHTRSKSRSSSKSHSRRKRSQSKHRSRSHNRSRS and SKSPHKKRSKSRERRKSRSRSRSRD. A compositionally biased stretch (basic and acidic residues) spans 263-340; sequence KRKDTREKVK…DRSKEADEKR (78 aa). A Phosphothreonine modification is found at T348. Over residues 357–373 the composition is skewed to basic residues; it reads RRSRSASRERRRRRSRS. 2 stretches are compositionally biased toward basic and acidic residues: residues 404–453 and 463–474; these read REKE…KEAD and KDTARTEEESKA.

Belongs to the splicing factor SR family. As to quaternary structure, interacts with SREK1IP1. Homodimer. Binds SFRS1, SFRS2, SFRS3 and SFRS6. Interacts with the spliceosome. In terms of tissue distribution, ubiquitous. Detected in liver, brain, lung, spleen, testis and pancreas.

Its subcellular location is the nucleus. Its function is as follows. Participates in the regulation of alternative splicing by modulating the activity of other splice facors. Inhibits the splicing activity of SFRS1, SFRS2 and SFRS6. Augments the splicing activity of SFRS3. The protein is Splicing regulatory glutamine/lysine-rich protein 1 (Srek1) of Rattus norvegicus (Rat).